A 156-amino-acid chain; its full sequence is Arginine repressor (156 aa).

Belongs to the ArgR family.

The protein resides in the cytoplasm. It functions in the pathway amino-acid biosynthesis; L-arginine biosynthesis [regulation]. Regulates arginine biosynthesis genes. This is Arginine repressor from Shewanella putrefaciens (strain CN-32 / ATCC BAA-453).